A 943-amino-acid chain; its full sequence is PAX-interacting protein 1 (943 aa).

BRCT domains lie at 8-93 (VPEE…GFSP) and 94-182 (ESGQ…LYHP). 3 disordered regions span residues 190–281 (PEEE…RRLQ), 400–507 (AQQQ…QQMR), and 620–641 (QQHLQNQQPLQHQNQQVNPHQT). The span at 198–214 (ENERSSRSEGSYSDRRS) shows a compositional bias: basic and acidic residues. Positions 220 to 230 (SSPTSSRDASP) are enriched in low complexity. Over residues 620–635 (QQHLQNQQPLQHQNQQ) the composition is skewed to low complexity. 2 consecutive BRCT domains span residues 664-756 (PEEG…RTLH) and 763-851 (PGAK…IQHS). The short motif at 730-747 (GKRCVTAHWLNTVLKKKK) is the Nuclear localization signal element.

Interacts with smad2 via its last three BRCT domain-containing regions in an activin signal-dependent manner.

It is found in the nucleus. Involved in DNA damage response. May function as transcriptional cofactor in TGF beta signaling. Accentuates Smad2-dependent transcription. The polypeptide is PAX-interacting protein 1 (paxip1) (Danio rerio (Zebrafish)).